We begin with the raw amino-acid sequence, 138 residues long: MGGAFSTSKPKPAAGEEGGESAVVAVHSKAKWDELWDAHKNTTKLVVIDFSASWCGPCKMMEPVFKEMAGRFTDVAFLKVDVDELAEVARTWRVEAMPTFVLARGGEEVGRIVGADKDELEKTINTLRSSSSSTATTT.

The disordered stretch occupies residues 1–20 (MGGAFSTSKPKPAAGEEGGE). Residues 12-129 (PAAGEEGGES…LEKTINTLRS (118 aa)) form the Thioredoxin domain. Catalysis depends on nucleophile residues C55 and C58. C55 and C58 form a disulfide bridge.

It belongs to the thioredoxin family. Plant H-type subfamily.

The protein localises to the cytoplasm. Its function is as follows. Probable thiol-disulfide oxidoreductase that may be involved in the redox regulation of a number of cytosolic enzymes. In Oryza sativa subsp. japonica (Rice), this protein is Thioredoxin H2-1.